Reading from the N-terminus, the 270-residue chain is Flavin-dependent thymidylate synthase (270 aa).

A ThyX domain is found at 13 to 218; it reads GFVRLVDQMG…PLAWAAFEEH (206 aa). Residues S59, 82–84, and E90 contribute to the FAD site; that span reads RHR. DUMP-binding positions include 79-82, 90-94, and R157; these read QWFR and EISGR. Positions 82–92 match the ThyX motif motif; sequence RHRTASVNEIS. FAD contacts are provided by residues 173-175 and H179; that span reads DLH. DUMP is bound at residue R184. R184 acts as the Involved in ionization of N3 of dUMP, leading to its activation in catalysis.

It belongs to the thymidylate synthase ThyX family. Homotetramer. Requires FAD as cofactor.

The enzyme catalyses dUMP + (6R)-5,10-methylene-5,6,7,8-tetrahydrofolate + NADPH + H(+) = dTMP + (6S)-5,6,7,8-tetrahydrofolate + NADP(+). Its pathway is pyrimidine metabolism; dTTP biosynthesis. Its function is as follows. Catalyzes the reductive methylation of 2'-deoxyuridine-5'-monophosphate (dUMP) to 2'-deoxythymidine-5'-monophosphate (dTMP) while utilizing 5,10-methylenetetrahydrofolate (mTHF) as the methyl donor, and NADPH and FADH(2) as the reductant. This chain is Flavin-dependent thymidylate synthase, found in Thermus thermophilus (strain ATCC BAA-163 / DSM 7039 / HB27).